The sequence spans 654 residues: ATP-dependent rRNA helicase spb-4 (654 aa).

The Q motif motif lies at 17 to 45 (WDALTPPLAQWILDYLSSMGFTQPTPVQK). In terms of domain architecture, Helicase ATP-binding spans 48 to 249 (LELFRGNKDV…TVGLLYPHKI (202 aa)). ATP is bound at residue 61-68 (AVTGSGKT). The short motif at 197 to 200 (DEAD) is the DEAD box element. In terms of domain architecture, Helicase C-terminal spans 286–444 (AIVQLLEKLE…VTPDEVERVS (159 aa)). Residues 531–631 (REKKRQEELA…EERAAALAAN (101 aa)) are a coiled coil. Over residues 542–577 (WKEEKAKRAQEENTGDKRKKNEAWSGKAEQEETKLQ) the composition is skewed to basic and acidic residues. The segment at 542 to 654 (WKEEKAKRAQ…SDEEFGGFDD (113 aa)) is disordered. A compositionally biased stretch (basic residues) spans 578–588 (RREKKRRKREA). Positions 589-625 (KKFSEMTEKEKEEHLKLEQMIEEVRKRNEAKAAEERA) are enriched in basic and acidic residues. Residues 644–654 (DSDEEFGGFDD) are compositionally biased toward acidic residues.

The protein belongs to the DEAD box helicase family. DDX55/SPB4 subfamily. As to quaternary structure, component of pre-60S ribosomal complexes.

The protein localises to the nucleus. The protein resides in the nucleolus. It catalyses the reaction ATP + H2O = ADP + phosphate + H(+). Its function is as follows. ATP-binding RNA helicase involved in the biogenesis of 60S ribosomal subunits. Binds 90S pre-ribosomal particles and dissociates from pre-60S ribosomal particles after processing of 27SB pre-rRNA. Required for the normal formation of 18S rRNA through the processing of pre-rRNAs at sites A0, A1 and A2, and the normal formation of 25S and 5.8S rRNAs through the processing of pre-rRNAs at sites C1 and C2. This Neurospora crassa (strain ATCC 24698 / 74-OR23-1A / CBS 708.71 / DSM 1257 / FGSC 987) protein is ATP-dependent rRNA helicase spb-4.